The sequence spans 26 residues: MTIDKNWLNRSNKDPGRSLRFTHQPV.

Residues 1–26 (MTIDKNWLNRSNKDPGRSLRFTHQPV) form a disordered region.

The sequence is that of Protein YsdD from Escherichia coli (strain K12).